We begin with the raw amino-acid sequence, 226 residues long: MLKAVFFDIDDTLYDTSGFAKLARKAALNVMIDAGLPLTQEEAYKLLREIISEKGSNYDRHFNVLTKTVFGEEKPLLIALGMITYHNVKFALLRPFPNTTSTLIDLKSKGYRLGVISNGITIKQWEKLIRLGIHHFFDEVVTSDEVGFEKPNIRIFEEALRRMGCKPERSVMVGNKFNEDILGATNAGMSAILVNSELTEAERDHVEKNGLDVTVIDDISQLKEIL.

The protein belongs to the HAD-like hydrolase superfamily. The cofactor is Mg(2+).

Catalyzes the dephosphorylation of D,L-glyceraldehyde 3-phosphate in vitro. This Methanothermobacter thermautotrophicus (strain ATCC 29096 / DSM 1053 / JCM 10044 / NBRC 100330 / Delta H) (Methanobacterium thermoautotrophicum) protein is Glyceraldehyde 3-phosphate phosphatase.